We begin with the raw amino-acid sequence, 58 residues long: Photosystem II reaction center protein K (58 aa).

Positions 1-21 (MFDLYLKNLLDLSDSGTVVLA) are excised as a propeptide. A helical membrane pass occupies residues 29-49 (IFDPIVDVLPVIPVFFLLLAF).

This sequence belongs to the PsbK family. In terms of assembly, PSII is composed of 1 copy each of membrane proteins PsbA, PsbB, PsbC, PsbD, PsbE, PsbF, PsbH, PsbI, PsbJ, PsbK, PsbL, PsbM, PsbT, PsbX, PsbY, PsbZ, Psb30/Ycf12, at least 3 peripheral proteins of the oxygen-evolving complex and a large number of cofactors. It forms dimeric complexes.

It is found in the plastid. Its subcellular location is the chloroplast thylakoid membrane. In terms of biological role, one of the components of the core complex of photosystem II (PSII). PSII is a light-driven water:plastoquinone oxidoreductase that uses light energy to abstract electrons from H(2)O, generating O(2) and a proton gradient subsequently used for ATP formation. It consists of a core antenna complex that captures photons, and an electron transfer chain that converts photonic excitation into a charge separation. The protein is Photosystem II reaction center protein K of Zygnema circumcarinatum (Green alga).